Reading from the N-terminus, the 153-residue chain is Cytochrome c-type biogenesis protein CcmE (153 aa).

Topologically, residues 1-8 (MTTRRGRR) are cytoplasmic. The chain crosses the membrane as a helical; Signal-anchor for type II membrane protein span at residues 9–29 (ALLIAGGVGLLALAAALVLNA). The Periplasmic portion of the chain corresponds to 30–153 (LRSNLVFFFS…PSATLQTEAR (124 aa)). Heme-binding residues include H124 and Y128.

This sequence belongs to the CcmE/CycJ family.

It is found in the cell inner membrane. Its function is as follows. Heme chaperone required for the biogenesis of c-type cytochromes. Transiently binds heme delivered by CcmC and transfers the heme to apo-cytochromes in a process facilitated by CcmF and CcmH. The sequence is that of Cytochrome c-type biogenesis protein CcmE from Bordetella parapertussis (strain 12822 / ATCC BAA-587 / NCTC 13253).